Consider the following 239-residue polypeptide: Purine nucleoside phosphorylase DeoD-type (239 aa).

An a purine D-ribonucleoside-binding site is contributed by histidine 5. Phosphate is bound by residues glycine 21, arginine 25, arginine 44, and 88 to 91 (RVGS). A purine D-ribonucleoside-binding positions include 180–182 (EME) and 204–205 (SD). Aspartate 205 (proton donor) is an active-site residue.

Belongs to the PNP/UDP phosphorylase family. In terms of assembly, homohexamer; trimer of homodimers.

It carries out the reaction a purine D-ribonucleoside + phosphate = a purine nucleobase + alpha-D-ribose 1-phosphate. The catalysed reaction is a purine 2'-deoxy-D-ribonucleoside + phosphate = a purine nucleobase + 2-deoxy-alpha-D-ribose 1-phosphate. Its function is as follows. Catalyzes the reversible phosphorolytic breakdown of the N-glycosidic bond in the beta-(deoxy)ribonucleoside molecules, with the formation of the corresponding free purine bases and pentose-1-phosphate. The chain is Purine nucleoside phosphorylase DeoD-type from Salmonella gallinarum (strain 287/91 / NCTC 13346).